The sequence spans 407 residues: Phosphoglycerate kinase (407 aa).

Substrate is bound by residues 21–23 (DLN), Arg36, 59–62 (HQGR), Arg116, and Arg156. Residues Glu332 and 358–361 (GGDT) contribute to the ATP site.

The protein belongs to the phosphoglycerate kinase family. Monomer.

It is found in the cytoplasm. The enzyme catalyses (2R)-3-phosphoglycerate + ATP = (2R)-3-phospho-glyceroyl phosphate + ADP. It functions in the pathway carbohydrate degradation; glycolysis; pyruvate from D-glyceraldehyde 3-phosphate: step 2/5. The sequence is that of Phosphoglycerate kinase from Halorubrum lacusprofundi (strain ATCC 49239 / DSM 5036 / JCM 8891 / ACAM 34).